The following is a 149-amino-acid chain: Large ribosomal subunit protein bL9 (149 aa).

This sequence belongs to the bacterial ribosomal protein bL9 family.

In terms of biological role, binds to the 23S rRNA. This is Large ribosomal subunit protein bL9 from Xylella fastidiosa (strain M23).